We begin with the raw amino-acid sequence, 211 residues long: ATP phosphoribosyltransferase (211 aa).

This sequence belongs to the ATP phosphoribosyltransferase family. Short subfamily. In terms of assembly, heteromultimer composed of HisG and HisZ subunits.

Its subcellular location is the cytoplasm. The catalysed reaction is 1-(5-phospho-beta-D-ribosyl)-ATP + diphosphate = 5-phospho-alpha-D-ribose 1-diphosphate + ATP. It functions in the pathway amino-acid biosynthesis; L-histidine biosynthesis; L-histidine from 5-phospho-alpha-D-ribose 1-diphosphate: step 1/9. Its function is as follows. Catalyzes the condensation of ATP and 5-phosphoribose 1-diphosphate to form N'-(5'-phosphoribosyl)-ATP (PR-ATP). Has a crucial role in the pathway because the rate of histidine biosynthesis seems to be controlled primarily by regulation of HisG enzymatic activity. The sequence is that of ATP phosphoribosyltransferase from Bacillus cereus (strain B4264).